A 1169-amino-acid chain; its full sequence is ATP-dependent helicase/deoxyribonuclease subunit B (1169 aa).

The UvrD-like helicase ATP-binding domain maps to 1 to 296 (MTLRIVSGRS…QHVEANFANM (296 aa)). 8–15 (GRSGTGKS) lines the ATP pocket. A UvrD-like helicase C-terminal domain is found at 276–582 (YYTQRFQSED…EFSRIPPTLD (307 aa)). 4 residues coordinate [4Fe-4S] cluster: Cys804, Cys1129, Cys1132, and Cys1138.

The protein belongs to the helicase family. AddB/RexB type 1 subfamily. In terms of assembly, heterodimer of AddA and AddB. It depends on Mg(2+) as a cofactor. Requires [4Fe-4S] cluster as cofactor.

In terms of biological role, the heterodimer acts as both an ATP-dependent DNA helicase and an ATP-dependent, dual-direction single-stranded exonuclease. Recognizes the chi site generating a DNA molecule suitable for the initiation of homologous recombination. The AddB subunit has 5' -&gt; 3' nuclease activity but not helicase activity. The chain is ATP-dependent helicase/deoxyribonuclease subunit B from Lysinibacillus sphaericus (strain C3-41).